Consider the following 445-residue polypeptide: Secretin receptor (445 aa).

Residues 1-21 (MCPRPGPPLGLWLLLGFACAA) form the signal peptide. Topologically, residues 22–137 (HLVGAPPRLC…HERQHAYLLK (116 aa)) are extracellular. Cystine bridges form between Cys44–Cys71, Cys62–Cys103, and Cys85–Cys119. Residues Asn68, Asn96, Asn102, and Asn124 are each glycosylated (N-linked (GlcNAc...) asparagine). The chain crosses the membrane as a helical span at residues 138-163 (LKVMYTVGYSSSLVMLLVALGILCAF). Residues 164–170 (RRLHCTR) are Cytoplasmic-facing. A helical membrane pass occupies residues 171-191 (NYIHMHLFLSFILRALSNFIK). Residues 192–212 (DAVLFSSDDAIHCDAHRVGCK) lie on the Extracellular side of the membrane. A disulfide bridge connects residues Cys211 and Cys281. Residues 213–235 (LVMVFFQYCIMANYAWLLVEGLY) form a helical membrane-spanning segment. The Cytoplasmic segment spans residues 236 to 250 (LHSLLVVSFFSERKC). Residues 251–272 (LQGFVVLGWGSPAMFVTSWAVT) traverse the membrane as a helical segment. Residues 273–287 (RHFLEDSGCWDINAN) are Extracellular-facing. The chain crosses the membrane as a helical span at residues 288–311 (AAIWWVIRGPVILSILINFILFIN). At 312 to 336 (ILRILTRKLRTQETRGQDMNHYKRL) the chain is on the cytoplasmic side. Residues 337 to 352 (ARSTLLLIPLFGVHYI) traverse the membrane as a helical segment. Residues 353–363 (VFVFSPEGAME) lie on the Extracellular side of the membrane. Residues 364 to 387 (IQLFFELALGSFQGLVVAVLYCFL) form a helical membrane-spanning segment. Over 388–445 (NGEVQLEVQKKWQQWHLWEPPLCPVALSSSFSNGTSSLNSTKACPSGRSRDTCKVSII) the chain is Cytoplasmic.

Belongs to the G-protein coupled receptor 2 family. Phosphorylated on Ser and Thr residues at the cytoplasmic C-terminus by G protein-coupled receptor kinases (GRKs).

Its subcellular location is the cell membrane. The protein localises to the basolateral cell membrane. Its function is as follows. G protein-coupled receptor activated by secretin (SCT), which is involved in different processes such as regulation of the pH of the duodenal content, food intake and water homeostasis. Ligand binding causes a conformation change that triggers signaling via guanine nucleotide-binding proteins (G proteins) and activates cAMP-dependent pathway. Upon binding to secretin, regulates the pH of the duodenum by (1) inhibiting the secretion of gastric acid from the parietal cells of the stomach and (2) stimulating the production of bicarbonate (NaHCO(3)) from the ductal cells of the pancreas. In addition to regulating the pH of the duodenal content, plays a central role in diet induced thermogenesis: acts as a non-sympathetic brown fat (BAT) activator mediating prandial thermogenesis, which consequentially induces satiation. Mechanistically, secretin released by the gut after a meal binds to secretin receptor (SCTR) in brown adipocytes, activating brown fat thermogenesis by stimulating lipolysis, which is sensed in the brain and promotes satiation. Also able to stimulate lipolysis in white adipocytes. Also plays an important role in cellular osmoregulation by regulating renal water reabsorption. Also plays a role in the central nervous system: required for synaptic plasticity. This is Secretin receptor (SCTR) from Oryctolagus cuniculus (Rabbit).